A 104-amino-acid polypeptide reads, in one-letter code: Gastrin (104 aa).

An N-terminal signal peptide occupies residues 1–21 (MQRLCVCVLILALALTAFSEA). The disordered stretch occupies residues 22–49 (SWKPRSQLQDAPSGPGANGGLEPHWLNR). Residues 22 to 58 (SWKPRSQLQDAPSGPGANGGLEPHWLNRLGPASHHRW) constitute a propeptide that is removed on maturation. 2 positions are modified to pyrrolidone carboxylic acid: Gln59 and Gln76. Residue Tyr87 is modified to Sulfotyrosine. Residue Phe92 is modified to Phenylalanine amide. Residue Ser96 is modified to Phosphoserine. Positions 96–104 (SAEDGDQHP) are excised as a propeptide.

Belongs to the gastrin/cholecystokinin family.

Its subcellular location is the secreted. Functionally, gastrin stimulates the stomach mucosa to produce and secrete hydrochloric acid and the pancreas to secrete its digestive enzymes. It also stimulates smooth muscle contraction and increases blood circulation and water secretion in the stomach and intestine. The sequence is that of Gastrin (GAST) from Felis catus (Cat).